The following is a 469-amino-acid chain: 24-hydroxycholesterol 7-alpha-hydroxylase (469 aa).

The signal sequence occupies residues M1–R23. Helical transmembrane passes span G267–A287, V352–L372, and F412–L432. A heme-binding site is contributed by C414.

It belongs to the cytochrome P450 family. It depends on heme as a cofactor. As to expression, liver specific.

The protein localises to the endoplasmic reticulum membrane. Its subcellular location is the microsome membrane. The enzyme catalyses (24S)-hydroxycholesterol + reduced [NADPH--hemoprotein reductase] + O2 = (24S)-7alpha-dihydroxycholesterol + oxidized [NADPH--hemoprotein reductase] + H2O + H(+). It participates in steroid metabolism; cholesterol degradation. Its pathway is lipid metabolism; bile acid biosynthesis. In terms of biological role, a cytochrome P450 monooxygenase involved in neural cholesterol clearance through bile acid synthesis. Catalyzes 7-alpha hydroxylation of (24S)-hydroxycholesterol, a neural oxysterol that is metabolized to bile acids in the liver. Mechanistically, uses molecular oxygen inserting one oxygen atom into a substrate, and reducing the second into a water molecule, with two electrons provided by NADPH via cytochrome P450 reductase (CPR; NADPH-ferrihemoprotein reductase). The sequence is that of 24-hydroxycholesterol 7-alpha-hydroxylase from Homo sapiens (Human).